The following is an 87-amino-acid chain: Selenoprotein W (87 aa).

The segment at residues 10-13 (CGAU) is a cross-link (cysteinyl-selenocysteine (Cys-Sec); redox-active). Residue U13 is a non-standard amino acid, selenocysteine. Position 37 is an S-glutathionyl cysteine (C37).

The protein belongs to the SelWTH family. Selenoprotein W subfamily. In terms of assembly, interacts with DPYSL2, PRDX1, YWHAB, YWHAG, HSP70 and HSP90. In terms of tissue distribution, highest levels detected in skeletal muscle, tongue, heart and brain. Expressed at significantly higher levels in female skeletal muscle than in male and at slightly higher levels in female cardiac muscle than in male (at protein level). Also detected at low levels in liver.

The protein localises to the cytoplasm. In terms of biological role, plays a role as a glutathione (GSH)-dependent antioxidant. May be involved in a redox-related process. May play a role in the myopathies of selenium deficiency. The sequence is that of Selenoprotein W from Macaca mulatta (Rhesus macaque).